Consider the following 288-residue polypeptide: Ribosomal RNA small subunit methyltransferase A (288 aa).

S-adenosyl-L-methionine-binding residues include N18, L20, G45, E66, D91, and N118.

It belongs to the class I-like SAM-binding methyltransferase superfamily. rRNA adenine N(6)-methyltransferase family. RsmA subfamily.

It is found in the cytoplasm. It catalyses the reaction adenosine(1518)/adenosine(1519) in 16S rRNA + 4 S-adenosyl-L-methionine = N(6)-dimethyladenosine(1518)/N(6)-dimethyladenosine(1519) in 16S rRNA + 4 S-adenosyl-L-homocysteine + 4 H(+). Functionally, specifically dimethylates two adjacent adenosines (A1518 and A1519) in the loop of a conserved hairpin near the 3'-end of 16S rRNA in the 30S particle. May play a critical role in biogenesis of 30S subunits. In Pasteurella multocida (strain Pm70), this protein is Ribosomal RNA small subunit methyltransferase A.